The chain runs to 152 residues: Deoxyuridine 5'-triphosphate nucleotidohydrolase (152 aa).

Residues 71–73 (RSG), N84, 88–90 (LID), and M98 each bind substrate.

This sequence belongs to the dUTPase family. The cofactor is Mg(2+).

The catalysed reaction is dUTP + H2O = dUMP + diphosphate + H(+). The protein operates within pyrimidine metabolism; dUMP biosynthesis; dUMP from dCTP (dUTP route): step 2/2. In terms of biological role, this enzyme is involved in nucleotide metabolism: it produces dUMP, the immediate precursor of thymidine nucleotides and it decreases the intracellular concentration of dUTP so that uracil cannot be incorporated into DNA. This Shewanella putrefaciens (strain CN-32 / ATCC BAA-453) protein is Deoxyuridine 5'-triphosphate nucleotidohydrolase.